Consider the following 373-residue polypeptide: WAT1-related protein At4g30420 (373 aa).

Transmembrane regions (helical) follow at residues Ala2–Val22, Val29–Ser49, Ile55–Gly75, Met94–Gly114, Gly125–Leu145, Trp173–Leu193, Leu205–Phe225, Cys244–Ala264, Phe270–Phe290, and Ile294–Trp314. EamA domains follow at residues Cys9 to Cys135 and Cys186 to Leu313.

This sequence belongs to the drug/metabolite transporter (DMT) superfamily. Plant drug/metabolite exporter (P-DME) (TC 2.A.7.4) family.

It localises to the membrane. This chain is WAT1-related protein At4g30420, found in Arabidopsis thaliana (Mouse-ear cress).